Consider the following 675-residue polypeptide: 1,4-alpha-glucan branching enzyme TK1436 (675 aa).

Residue Glu183 is the Nucleophile of the active site. Substrate is bound by residues Arg261 and Gly278. The active-site Proton donor is Asp354. 3 residues coordinate substrate: Trp407, Asp467, and Gln476. Disordered regions lie at residues Pro537–Thr563 and Glu581–Lys627. Basic and acidic residues-rich tracts occupy residues Pro549–Thr563 and Glu581–Lys595. Basic residues predominate over residues Arg596–Pro616.

Belongs to the glycosyl hydrolase 57 family. In terms of assembly, monomer.

It catalyses the reaction Transfers a segment of a (1-&gt;4)-alpha-D-glucan chain to a primary hydroxy group in a similar glucan chain.. In terms of biological role, catalyzes the formation of branch points in alpha-glucans by cleavage of an alpha-1,4 glycosidic bond and subsequent transfer of the cleaved-off oligosaccharide to a new alpha-1,6 position. The branch chain-length distribution of the reaction products shows degree of polymerization (DP) of 5 to 30, with two local maxima at DP 6 and DP 11. Exhibits an alpha-retaining catalytic mechanism. Does not display alpha-galactosidase or pullulanase activity, since melibiose and pullulan are not substrates. Is not able to catalyze the hydrolysis or transglycosylation of maltoheptaose, suggesting that the TK1436 protein contains neither alpha-amylase nor 4-alpha-glucanotransferase activity. In Thermococcus kodakarensis (strain ATCC BAA-918 / JCM 12380 / KOD1) (Pyrococcus kodakaraensis (strain KOD1)), this protein is 1,4-alpha-glucan branching enzyme TK1436.